The primary structure comprises 128 residues: Fluoride-specific ion channel FluC 2 (128 aa).

Transmembrane regions (helical) follow at residues 13–35, 40–59, 71–93, and 97–119; these read ALVA…AIAG, LAAN…EAAA, LLGT…TAGL, and WMAA…GRAI.

The protein belongs to the fluoride channel Fluc/FEX (TC 1.A.43) family.

It localises to the cell membrane. The catalysed reaction is fluoride(in) = fluoride(out). Its function is as follows. Fluoride-specific ion channel. Important for reducing fluoride concentration in the cell, thus reducing its toxicity. This Halobacterium salinarum (strain ATCC 700922 / JCM 11081 / NRC-1) (Halobacterium halobium) protein is Fluoride-specific ion channel FluC 2.